Consider the following 1719-residue polypeptide: MRTLLPPVGSEVFRRFTQSSLNEIQQKQQIREEERKRTNAQVSEELPEPASDLEAGKPLPFIYGEPPHELLNVPLEDIDPFYQSQKTFIVLSKGNIIYRFNAESSLYLLSPFNALRIVAIKILIHSLFSLFIMATILTNCAFMTLSDPPAWSKTMEYVFTFIYTFEATIKILSRGFCVGKFTFLKDPWNWLDFMVISMAYLTELVDLGNVSVLRTFRVLRALKTITVIPGLKTIVGALIQSVRKLADAMVLTVFCLSVFALIGLQLFMGNLRQKCVLIPQWLYGNLTFDINSTNGYYGNDTHDNGTKSKHLEFEFERHINNPDNYYYLTGQGDPLLCGNSSDAGVCPESYVCLKVGANPNYGYTSYDSFGWAFLALFRLMTQDFWENLFQLTLRTAGKTYMIFFVVVIFLGSFYLINLILAVVAMAYAEQNEATLAEAKEKEEEYIHILEALKKREEEQAARKEPHSTVEGFEDDHRLCPPCWYAFANIFLKWDCCGCWRHLKECLYAIVMDPFVDLGITICIILNTVFMAMEHYPMSADFEELLSVGNLVFTGIFTGEMVFKILAMDPYFYFQVGWNIFDSIIVTISLVELGLANVQGLSVLRSFRLMRVFKLAKSWPTLNMLIKIIGNSVGALGNLTLVLAIIVFIFAVVGMQLFGKNYKDCVCRISEDCVLPRWHMNDFFHAFLIIFRVLCGEWIESMWDCMEVSGQTMCLIVFMMVLVIGNLVVLNLFLALLLSSFSGDNLTTQDDEGENNLQIAINRINRAMSWTKTYILLYVYTLTESNLNQHFAVSDDEEQRRVKDILALTSVSSDKLVSHHCGNDFFRVPIAEAESDSDDSDYDEDKDSQCDESSVCSSVQKPEVQEEEMDENCVAKTPTDCWTKKCYSRCPFLDIDTSQGRGKIWCNIRRTCFSIVENNYFESFIVFMILLSSGALAFEDIYLEKHQLIKSILEYADKVFTYVFVMEMVLKWFAYGFKSYFSNAWCWLDFLIVDVSLVSLTANILGYSELGAIKSLRTLRALRPLRALSRFEGMRVVVNALVGAVPSIFNVLLVCLIFWLIFSIMGVNLFAGKFSYCFNETSQEIIDTKVVDNKTECIALIKANFTEVRWKNVKVNYDNVGIGYLSLLQVATFKGWTDIMYAAVDSRDVESQPIYEVNLYMYLYFVIFIIFGSFFTLNLFIGVIIDNFNQQKAKLGGQDIFMTEEQKKYYNAMKKLGSKKPQKPVPRPENPFQGLVFDLVTKQIFDVFIMVLICLNMVTMMVETDEQSDKKEEVLYWINVVFILIFTTECTLKIIALRRHYFSIGWNIFDFVVVILSILGLLLADIIEKYFVSPTLFRVIRLARIGRVLRLIRGAKGIRTLLFALMMSLPALFNIGLLLFLIMFIFSIFGMSNFAYVKKEALIDDMFNFETFGNSMICLFMITTSAGWDGLLSPIMNTPPDCDPNVENPGTTVRGNCGSPAIGIAFFSTYIIMSFLVVVNMFIAIILENFNVATEESSDPLCEDDFEMFYETWEKFDPDASQFIQYSKLSDFCDTLKEPLRIPQPNTIKLISMDLPLVPGDRIHCMDILLALTAEVLGDSDEMDTLKATMEEKFMANNPSKVSYEPISSTLLRKEEEVAATVIQRAYRKYLLLRTVRLASFMYREKTEGRGKEKAPETTGLLCKQFSQLYGFNKETDEPLQSKANRLGQVELQSEVLLHAVPPLRSSEFLQERDQRETSV.

Over 1 to 126 the chain is Cytoplasmic; the sequence is MRTLLPPVGS…IVAIKILIHS (126 aa). Positions 28 to 50 are disordered; it reads QQIREEERKRTNAQVSEELPEPA. The stretch at 108-431 is one I repeat; the sequence is LLSPFNALRI…VVAMAYAEQN (324 aa). The chain crosses the membrane as a helical span at residues 127–145; sequence LFSLFIMATILTNCAFMTL. Topologically, residues 146–152 are extracellular; sequence SDPPAWS. A helical membrane pass occupies residues 153 to 173; that stretch reads KTMEYVFTFIYTFEATIKILS. Residues 174-187 lie on the Cytoplasmic side of the membrane; sequence RGFCVGKFTFLKDP. The chain crosses the membrane as a helical span at residues 188–205; that stretch reads WNWLDFMVISMAYLTELV. At 206 to 211 the chain is on the extracellular side; it reads DLGNVS. N-linked (GlcNAc...) asparagine glycosylation is present at Asn209. A helical membrane pass occupies residues 212–228; it reads VLRTFRVLRALKTITVI. Residues 229-247 are Cytoplasmic-facing; that stretch reads PGLKTIVGALIQSVRKLAD. Residues 248-267 traverse the membrane as a helical segment; it reads AMVLTVFCLSVFALIGLQLF. At 268–368 the chain is on the extracellular side; sequence MGNLRQKCVL…PNYGYTSYDS (101 aa). Cysteines 275 and 337 form a disulfide. Residues Asn285 and Asn339 are each glycosylated (N-linked (GlcNAc...) asparagine). The cysteines at positions 346 and 352 are disulfide-linked. The segment at residues 369–393 is an intramembrane region (pore-forming); the sequence is FGWAFLALFRLMTQDFWENLFQLTL. Residues 394–400 lie on the Extracellular side of the membrane; that stretch reads RTAGKTY. A helical transmembrane segment spans residues 401–421; it reads MIFFVVVIFLGSFYLINLILA. Residues 422–513 are Cytoplasmic-facing; the sequence is VVAMAYAEQN…ECLYAIVMDP (92 aa). The II repeat unit spans residues 495–766; that stretch reads CCGCWRHLKE…QIAINRINRA (272 aa). The helical transmembrane segment at 514–532 threads the bilayer; sequence FVDLGITICIILNTVFMAM. The Extracellular portion of the chain corresponds to 533–543; that stretch reads EHYPMSADFEE. A helical transmembrane segment spans residues 544-563; sequence LLSVGNLVFTGIFTGEMVFK. Residues 564 to 577 are Cytoplasmic-facing; sequence ILAMDPYFYFQVGW. Residues 578-597 traverse the membrane as a helical segment; it reads NIFDSIIVTISLVELGLANV. The Extracellular segment spans residues 598 to 599; it reads QG. The chain crosses the membrane as a helical span at residues 600 to 617; sequence LSVLRSFRLMRVFKLAKS. At 618–633 the chain is on the cytoplasmic side; the sequence is WPTLNMLIKIIGNSVG. Residues 634 to 652 traverse the membrane as a helical segment; it reads ALGNLTLVLAIIVFIFAVV. Over 653–681 the chain is Extracellular; that stretch reads GMQLFGKNYKDCVCRISEDCVLPRWHMND. An intrachain disulfide couples Cys666 to Cys672. Positions 682 to 702 form an intramembrane region, pore-forming; it reads FFHAFLIIFRVLCGEWIESMW. Topologically, residues 703-713 are extracellular; it reads DCMEVSGQTMC. A disulfide bridge links Cys704 with Cys713. A helical transmembrane segment spans residues 714–732; sequence LIVFMMVLVIGNLVVLNLF. Topologically, residues 733-919 are cytoplasmic; that stretch reads LALLLSSFSG…TCFSIVENNY (187 aa). Over residues 834–845 the composition is skewed to acidic residues; that stretch reads SDSDDSDYDEDK. The tract at residues 834-862 is disordered; that stretch reads SDSDDSDYDEDKDSQCDESSVCSSVQKPE. The III repeat unit spans residues 900–1215; sequence RGKIWCNIRR…KKYYNAMKKL (316 aa). A helical membrane pass occupies residues 920-937; sequence FESFIVFMILLSSGALAF. The Extracellular portion of the chain corresponds to 938-950; that stretch reads EDIYLEKHQLIKS. The helical transmembrane segment at 951 to 969 threads the bilayer; sequence ILEYADKVFTYVFVMEMVL. The Cytoplasmic portion of the chain corresponds to 970–983; the sequence is KWFAYGFKSYFSNA. Residues 984–1002 form a helical membrane-spanning segment; sequence WCWLDFLIVDVSLVSLTAN. Topologically, residues 1003 to 1010 are extracellular; the sequence is ILGYSELG. A helical transmembrane segment spans residues 1011 to 1029; sequence AIKSLRTLRALRPLRALSR. Residues 1030 to 1046 are Cytoplasmic-facing; that stretch reads FEGMRVVVNALVGAVPS. Residues 1047–1066 form a helical membrane-spanning segment; it reads IFNVLLVCLIFWLIFSIMGV. Residues 1067-1119 are Extracellular-facing; the sequence is NLFAGKFSYCFNETSQEIIDTKVVDNKTECIALIKANFTEVRWKNVKVNYDNV. A disulfide bridge connects residues Cys1076 and Cys1096. N-linked (GlcNAc...) asparagine glycans are attached at residues Asn1078 and Asn1092. Positions 1120–1141 form an intramembrane region, pore-forming; that stretch reads GIGYLSLLQVATFKGWTDIMYA. Over 1142–1158 the chain is Extracellular; the sequence is AVDSRDVESQPIYEVNL. A helical membrane pass occupies residues 1159-1180; the sequence is YMYLYFVIFIIFGSFFTLNLFI. Over 1181-1243 the chain is Cytoplasmic; sequence GVIIDNFNQQ…LVFDLVTKQI (63 aa). Residues 1199–1201 are important for rapid channel inactivation; sequence IFM. One copy of the IV repeat lies at 1224–1521; sequence VPRPENPFQG…WEKFDPDASQ (298 aa). Residues 1244-1261 traverse the membrane as a helical segment; the sequence is FDVFIMVLICLNMVTMMV. Over 1262 to 1272 the chain is Extracellular; sequence ETDEQSDKKEE. The chain crosses the membrane as a helical span at residues 1273–1291; that stretch reads VLYWINVVFILIFTTECTL. The Cytoplasmic segment spans residues 1292–1303; sequence KIIALRRHYFSI. A helical transmembrane segment spans residues 1304–1321; that stretch reads GWNIFDFVVVILSILGLL. Residues 1322–1334 lie on the Extracellular side of the membrane; sequence LADIIEKYFVSPT. Residues 1335 to 1351 traverse the membrane as a helical segment; it reads LFRVIRLARIGRVLRLI. Residues 1352–1370 are Cytoplasmic-facing; sequence RGAKGIRTLLFALMMSLPA. A helical transmembrane segment spans residues 1371–1388; the sequence is LFNIGLLLFLIMFIFSIF. The Extracellular portion of the chain corresponds to 1389–1410; it reads GMSNFAYVKKEALIDDMFNFET. The pore-forming intramembrane region spans 1411 to 1433; the sequence is FGNSMICLFMITTSAGWDGLLSP. The Extracellular portion of the chain corresponds to 1434–1462; it reads IMNTPPDCDPNVENPGTTVRGNCGSPAIG. Cys1441 and Cys1456 are disulfide-bonded. Residues 1463–1485 traverse the membrane as a helical segment; that stretch reads IAFFSTYIIMSFLVVVNMFIAII. The Cytoplasmic portion of the chain corresponds to 1486–1719; the sequence is LENFNVATEE…QERDQRETSV (234 aa). The region spanning 1615 to 1644 is the IQ domain; the sequence is EEVAATVIQRAYRKYLLLRTVRLASFMYRE.

The protein belongs to the sodium channel (TC 1.A.1.10) family. Nav1.4/SCN4A subfamily. In terms of assembly, voltage-gated sodium (Nav) channels consist of an ion-conducting alpha subunit which is functional on its own associated with regulatory beta subunits.

Its subcellular location is the cell membrane. It carries out the reaction Na(+)(in) = Na(+)(out). In terms of biological role, pore-forming subunit of a voltage-gated sodium (Nav) channel that directly mediates the depolarizing phase of action potentials in excitable membranes. Navs, also called VGSCs (voltage-gated sodium channels) or VDSCs (voltage-dependent sodium channels), operate by switching between closed and open conformations depending on the voltage difference across the membrane. In the open conformation they allow Na(+) ions to selectively pass through the pore, along their electrochemical gradient. The influx of Na+ ions provokes membrane depolarization, initiating the propagation of electrical signals throughout cells and tissues. In Takifugu rubripes (Japanese pufferfish), this protein is Sodium channel protein type 4 subunit alpha B (scn4ab).